Consider the following 697-residue polypeptide: Protein Niban 3 (697 aa).

The disordered stretch occupies residues Met-1 to Leu-48.

This sequence belongs to the Niban family. In terms of tissue distribution, specifically expressed in B-lymphocytes.

In Homo sapiens (Human), this protein is Protein Niban 3.